A 1576-amino-acid polypeptide reads, in one-letter code: Spermatogenesis-associated protein 31D1 (1576 aa).

Residues 29–49 (FICLSGLGLFILYLFYVVLTL) form a helical membrane-spanning segment. 5 disordered regions span residues 170–197 (FTLASTPSATPPEDLILSPRPKASPPPP), 542–572 (HESPVLPPPQPLSLPSTQPLPLPQTLPQGQS), 782–801 (KDHLLHGPETSSDKDLRSNS), 952–1033 (SQGD…TDFQ), and 1293–1347 (RVSP…PPPE). Residues 546 to 565 (VLPPPQPLSLPSTQPLPLPQ) are compositionally biased toward pro residues. Residues 966–980 (RSTFQGEKLGTTSSV) are compositionally biased toward polar residues. The segment covering 1004-1019 (QFSDTDHDLIETDSKD) has biased composition (basic and acidic residues). The span at 1020–1032 (GASTSLRRGTTDF) shows a compositional bias: polar residues.

Belongs to the SPATA31 family.

The protein localises to the membrane. In terms of biological role, may play a role in spermatogenesis. The polypeptide is Spermatogenesis-associated protein 31D1 (SPATA31D1) (Homo sapiens (Human)).